The following is a 542-amino-acid chain: LysM domain-containing protein ARB_00327 (542 aa).

An N-terminal signal peptide occupies residues 1–35; that stretch reads MLSSVLFPAMRTLLLLKYVFSLISLSAICCQTVSA. 4 N-linked (GlcNAc...) asparagine glycosylation sites follow: Asn218, Asn298, Asn381, and Asn415. A LysM 1 domain is found at 264-310; it reads RWYGVKKGDYCNLIVLKFGITMDNFIFLNPALNSNCTNLYAEESYCV. The disordered stretch occupies residues 439 to 484; the sequence is DSDEPTPTTPITTSDDPTSTSATPTTPTTSSKPSPGAPTMTGQPSA. Over residues 443-472 the composition is skewed to low complexity; sequence PTPTTPITTSDDPTSTSATPTTPTTSSKPS. Residues 487–534 enclose the LysM 2 domain; it reads KWHTVTNGESCTVIPKTFGITLEQFLAWNPTVKSDCTENFWAGYAYCV.

It localises to the secreted. Functionally, might have a role in sequestration of chitin oligosaccharides (breakdown products of fungal cell walls that are released during invasion and act as triggers of host immunity) to dampen host defense. The protein is LysM domain-containing protein ARB_00327 of Arthroderma benhamiae (strain ATCC MYA-4681 / CBS 112371) (Trichophyton mentagrophytes).